The chain runs to 211 residues: Small ribosomal subunit protein eS8 (211 aa).

Belongs to the eukaryotic ribosomal protein eS8 family.

The sequence is that of Small ribosomal subunit protein eS8 (rps8) from Dictyostelium discoideum (Social amoeba).